Reading from the N-terminus, the 418-residue chain is Transcription termination factor Rho (418 aa).

One can recognise a Rho RNA-BD domain in the interval 48–123 (SIFGEGTLEV…VKVDKVNGEA (76 aa)). ATP is bound by residues 169–174 (GKGQRA), 181–186 (KSGKTV), and Arg-212.

This sequence belongs to the Rho family. As to quaternary structure, homohexamer. The homohexamer assembles into an open ring structure.

In terms of biological role, facilitates transcription termination by a mechanism that involves Rho binding to the nascent RNA, activation of Rho's RNA-dependent ATPase activity, and release of the mRNA from the DNA template. The chain is Transcription termination factor Rho from Chromobacterium violaceum (strain ATCC 12472 / DSM 30191 / JCM 1249 / CCUG 213 / NBRC 12614 / NCIMB 9131 / NCTC 9757 / MK).